We begin with the raw amino-acid sequence, 394 residues long: ATP phosphoribosyltransferase regulatory subunit (394 aa).

This sequence belongs to the class-II aminoacyl-tRNA synthetase family. HisZ subfamily. As to quaternary structure, heteromultimer composed of HisG and HisZ subunits.

It localises to the cytoplasm. It participates in amino-acid biosynthesis; L-histidine biosynthesis; L-histidine from 5-phospho-alpha-D-ribose 1-diphosphate: step 1/9. In terms of biological role, required for the first step of histidine biosynthesis. May allow the feedback regulation of ATP phosphoribosyltransferase activity by histidine. The protein is ATP phosphoribosyltransferase regulatory subunit of Pseudomonas aeruginosa (strain LESB58).